The chain runs to 310 residues: Receptor homology region, transmembrane domain- and RING domain-containing protein 1 (310 aa).

The first 25 residues, 1–25 (MRLVVSSCLLVAAPFLSSLLRVSLA), serve as a signal peptide directing secretion. The Lumenal segment spans residues 26 to 168 (TVVLNSISAS…NPPDRGSAWT (143 aa)). C65 and C92 are oxidised to a cystine. Residue N75 is glycosylated (N-linked (GlcNAc...) asparagine). The PA domain occupies 81 to 149 (TTKFALIIRG…VAGEILRKYA (69 aa)). The chain crosses the membrane as a helical span at residues 169-189 (VLAISFFSLLLIVTFLLIAFF). The Cytoplasmic segment spans residues 190–310 (APRHWTQWRG…FAFAQSSQSR (121 aa)). Residues 232–274 (CAICLEDYRFGESLRLLPCQHAFHLNCIDSWLTKWGTSCPVCK) form an RING-type; atypical zinc finger. The segment covering 284–293 (SEVHKRESPR) has biased composition (basic and acidic residues). The disordered stretch occupies residues 284-310 (SEVHKRESPRTDTSTSRFAFAQSSQSR). The segment covering 294–310 (TDTSTSRFAFAQSSQSR) has biased composition (polar residues).

As to expression, expressed in leaves, stems, flowers and siliques.

Its subcellular location is the prevacuolar compartment membrane. It localises to the protein storage vacuole membrane. It is found in the golgi apparatus membrane. Its function is as follows. Involved in the trafficking of vacuolar proteins. Functions probably as a sorting receptor for protein trafficking to the protein storage vacuole (PSV) by binding the C-terminal vacuolar sorting determinant (VSD) of vacuolar-sorted proteins. The sequence is that of Receptor homology region, transmembrane domain- and RING domain-containing protein 1 (RMR1) from Arabidopsis thaliana (Mouse-ear cress).